Consider the following 62-residue polypeptide: Sperm protamine P1 (62 aa).

Residues 1–62 (MARYRRHSRS…RYSRRGRRRY (62 aa)) are disordered.

This sequence belongs to the protamine P1 family. In terms of tissue distribution, testis.

The protein localises to the nucleus. The protein resides in the chromosome. In terms of biological role, protamines substitute for histones in the chromatin of sperm during the haploid phase of spermatogenesis. They compact sperm DNA into a highly condensed, stable and inactive complex. This chain is Sperm protamine P1 (PRM1), found in Neophascogale lorentzii (Long-clawed marsupial mouse).